The chain runs to 291 residues: MSNILKFGIPKGSLEDATVDLFKQAGWQVGISSRSYFPTIDDEEMNCKLIRPQEMGKYVERGTIDVGIAGRDWVRENDSDVIEVCEMVYSKVSRRPVRWVLVVSQDSPVQKPEDLHGATISTELVGFTKRYFAERNIPVTVEFSWGATEAKVVDGLCDAIVEVTETGSTIRANNLRIVCDLMESVPVLIVNKAAWADPWKQAKIQQIATLLKSALAAEGMVGLKMNAPNSAVDAITEILPSLNNPTVSHLYNSDWVSIESILPEKEVRSIVPKLLKMGAEGIVEYPLNKII.

It belongs to the ATP phosphoribosyltransferase family. Long subfamily. Mg(2+) serves as cofactor.

The protein resides in the cytoplasm. It carries out the reaction 1-(5-phospho-beta-D-ribosyl)-ATP + diphosphate = 5-phospho-alpha-D-ribose 1-diphosphate + ATP. The protein operates within amino-acid biosynthesis; L-histidine biosynthesis; L-histidine from 5-phospho-alpha-D-ribose 1-diphosphate: step 1/9. Feedback inhibited by histidine. Catalyzes the condensation of ATP and 5-phosphoribose 1-diphosphate to form N'-(5'-phosphoribosyl)-ATP (PR-ATP). Has a crucial role in the pathway because the rate of histidine biosynthesis seems to be controlled primarily by regulation of HisG enzymatic activity. The sequence is that of ATP phosphoribosyltransferase from Geotalea uraniireducens (strain Rf4) (Geobacter uraniireducens).